Reading from the N-terminus, the 320-residue chain is Polyprenyl transferase pyr6 (320 aa).

6 consecutive transmembrane segments (helical) span residues 22–42 (KYNC…AAAS), 60–80 (GLAF…NDWI), 101–121 (LATR…VWLM), 127–147 (GQNL…YPFG), 155–175 (LGIY…LPAW), and 186–206 (PDLL…TIYF). Asn224 carries N-linked (GlcNAc...) asparagine glycosylation. The helical transmembrane segment at 233-253 (YVHGLLLLQAVAVVMVIPWIL) threads the bilayer. A glycan (N-linked (GlcNAc...) asparagine) is linked at Asn256. A run of 2 helical transmembrane segments spans residues 260–280 (WLWF…LYLF) and 296–316 (FALG…VSGS).

Belongs to the UbiA prenyltransferase family. Requires Mg(2+) as cofactor.

The protein localises to the membrane. It catalyses the reaction 4-hydroxy-6-(pyridin-3-yl)-2H-pyran-2-one + (2E,6E)-farnesyl diphosphate = 4-hydroxy-3-[(2E,6E)-farnesyl]-6-(pyridin-3-yl)-2H-pyran-2-one + diphosphate. It functions in the pathway secondary metabolite biosynthesis; terpenoid biosynthesis. Functionally, polyprenyl transferase; part of the gene cluster that mediates the biosynthesis of pyripyropene A, a specific human acyl-coenzyme A:cholesterol acyltransferase 2 inhibitor. The first step of the pathway is the synthesis of nicotinyl-CoA from nicotinic acid by the nicotinic acid-CoA ligase pyr1. Nicotinyl-CoA is then a substrate of polyketide synthase pyr2 to produce 4-hydroxy-6-(3-pyridinyl)-2H-pyran-2-one (HPPO) which is further prenylated by the polyprenyl transferase pyr6 to yield farnesyl-HPPO. The next steps consist of an epoxidation of farnesyl-HPPO to epoxyfarnesyl-HPPO by FAD-dependent monooxygenase pyr5 and a cyclization of the terpenoid portion by the terpene cyclase pyr4 to yield deacetyl-pyripyropene E. The 2 cytochrome P450 monooxygenases pyr3 and pyr9, and the 2 acetyltransferases pyr7 and pyr8 are involved in the conversion of deacetyl-pyripyropene E into pyripyropene A through several cycles of oxidation and acetylation steps. Pyr7 acetylates deacetyl-pyripyropene E to pyripyropene E which is oxidized to 11-deacetyl-pyripyropene O by pyr3, which is in turn acetylated into pyripyropene O by pyr8. Pyripyropene O is then oxidized to deacetyl-pyripyropene A by pyr9. Deacetyl-pyripyropene A is finally acetylated to pyripyropene A by pyr8. In Aspergillus fumigatus (strain ATCC MYA-4609 / CBS 101355 / FGSC A1100 / Af293) (Neosartorya fumigata), this protein is Polyprenyl transferase pyr6.